We begin with the raw amino-acid sequence, 156 residues long: ATP synthase subunit b (156 aa).

The chain crosses the membrane as a helical span at residues 7–26; that stretch reads LIGQAIWFALFIWITMKYVW.

Belongs to the ATPase B chain family. As to quaternary structure, F-type ATPases have 2 components, F(1) - the catalytic core - and F(0) - the membrane proton channel. F(1) has five subunits: alpha(3), beta(3), gamma(1), delta(1), epsilon(1). F(0) has three main subunits: a(1), b(2) and c(10-14). The alpha and beta chains form an alternating ring which encloses part of the gamma chain. F(1) is attached to F(0) by a central stalk formed by the gamma and epsilon chains, while a peripheral stalk is formed by the delta and b chains.

It localises to the cell inner membrane. F(1)F(0) ATP synthase produces ATP from ADP in the presence of a proton or sodium gradient. F-type ATPases consist of two structural domains, F(1) containing the extramembraneous catalytic core and F(0) containing the membrane proton channel, linked together by a central stalk and a peripheral stalk. During catalysis, ATP synthesis in the catalytic domain of F(1) is coupled via a rotary mechanism of the central stalk subunits to proton translocation. Functionally, component of the F(0) channel, it forms part of the peripheral stalk, linking F(1) to F(0). The chain is ATP synthase subunit b from Dechloromonas aromatica (strain RCB).